Reading from the N-terminus, the 509-residue chain is ATP synthase subunit alpha (509 aa).

Gly169 to Thr176 contributes to the ATP binding site.

The protein belongs to the ATPase alpha/beta chains family. As to quaternary structure, F-type ATPases have 2 components, CF(1) - the catalytic core - and CF(0) - the membrane proton channel. CF(1) has five subunits: alpha(3), beta(3), gamma(1), delta(1), epsilon(1). CF(0) has four main subunits: a(1), b(1), b'(1) and c(9-12).

It is found in the cell inner membrane. The enzyme catalyses ATP + H2O + 4 H(+)(in) = ADP + phosphate + 5 H(+)(out). Its function is as follows. Produces ATP from ADP in the presence of a proton gradient across the membrane. The alpha chain is a regulatory subunit. This chain is ATP synthase subunit alpha, found in Bradyrhizobium sp. (strain ORS 278).